Here is a 596-residue protein sequence, read N- to C-terminus: MSTSPAARPTSNPHLLGWVDEMAKLCKPDRVHWCDGSEAEKKRLTDDAVAAKVLIPLDQQKWPGCHYHHSNPSDVARVEHLTFICTPTKEQAGPTNNWMEPKEAYRKLGAIFDGSMKGRTMYVVPYVMGPSTSPFAKVGIEITDSVYVALNMGIMARMGKVALDRLGDSNEFNRGLHSVADCNPERRFICHFPQDNTIWSVGSGYGGNALLGKKCLALRIASYLAKNEGWLAEHMLILEAESPTGEKQYVAAAFPSACGKTNFAMMIPPAAFPGWKIRTVGDDISWMRVGEDGRLWAVNPENGYFGVAPGTNRKTNPNAMDSVRKDTIFTNVARTPDGDIWWEGMDHEAPAELIDWKGQPWKKGSTEKAAHPNSRFTAPAKNNPAISPLVDDPKGVPISAIIFGGRRSTTVPLVLEAFNWTHGVYLGSTMGSETTAAATGQVGVVRRDPMAMLPFIGYDCGSYLQHWLDMQSRIPNPPKIFLVNWFRKSAEGKFLWPGYGDNMRVLKWMLDRAAGRAPAKETLLGYTPGDAGLDLHGLDVSKDAIAAATRIDLGEWEQELESQAEWFEKLGKTLPAPLALQRELLLERVRAARKVK.

Substrate-binding positions include R77 and Y205 to G207. Mn(2+)-binding residues include K214 and H234. S256 lines the substrate pocket. A257–N262 is a GTP binding site. Residue C258 is part of the active site. D283 is a binding site for Mn(2+). The tract at residues K362–P388 is disordered. N373 to R375 contributes to the substrate binding site. GTP is bound by residues R375, R406, and Y499–N502.

The protein belongs to the phosphoenolpyruvate carboxykinase [GTP] family. Monomer. It depends on Mn(2+) as a cofactor.

It localises to the cytoplasm. The enzyme catalyses oxaloacetate + GTP = phosphoenolpyruvate + GDP + CO2. It participates in carbohydrate biosynthesis; gluconeogenesis. In terms of biological role, catalyzes the conversion of oxaloacetate (OAA) to phosphoenolpyruvate (PEP), the rate-limiting step in the metabolic pathway that produces glucose from lactate and other precursors derived from the citric acid cycle. The polypeptide is Phosphoenolpyruvate carboxykinase [GTP] (Anaeromyxobacter dehalogenans (strain 2CP-C)).